We begin with the raw amino-acid sequence, 226 residues long: Large ribosomal subunit protein uL1 (226 aa).

Belongs to the universal ribosomal protein uL1 family. In terms of assembly, part of the 50S ribosomal subunit.

Its function is as follows. Binds directly to 23S rRNA. The L1 stalk is quite mobile in the ribosome, and is involved in E site tRNA release. In terms of biological role, protein L1 is also a translational repressor protein, it controls the translation of the L11 operon by binding to its mRNA. This is Large ribosomal subunit protein uL1 from Selenomonas ruminantium.